The chain runs to 187 residues: Ubiquinone biosynthesis protein COQ4 homolog, mitochondrial (187 aa).

The Zn(2+) site is built by histidine 77, aspartate 78, histidine 81, and glutamate 93.

It belongs to the COQ4 family. In terms of assembly, component of a multi-subunit COQ enzyme complex. Zn(2+) is required as a cofactor.

It localises to the mitochondrion inner membrane. It catalyses the reaction a 4-hydroxy-3-methoxy-5-(all-trans-polyprenyl)benzoate + H(+) = a 2-methoxy-6-(all-trans-polyprenyl)phenol + CO2. It functions in the pathway cofactor biosynthesis; ubiquinone biosynthesis. Functionally, lyase that catalyzes the C1-decarboxylation of 4-hydroxy-3-methoxy-5-(all-trans-polyprenyl)benzoic acid into 2-methoxy-6-(all-trans-polyprenyl)phenol during ubiquinone biosynthesis. The polypeptide is Ubiquinone biosynthesis protein COQ4 homolog, mitochondrial (Leishmania braziliensis).